The primary structure comprises 932 residues: DNA mismatch repair protein MutS (932 aa).

Position 615–622 (615–622 (GPNMAGKS)) interacts with ATP.

This sequence belongs to the DNA mismatch repair MutS family.

This protein is involved in the repair of mismatches in DNA. It is possible that it carries out the mismatch recognition step. This protein has a weak ATPase activity. This Clostridium botulinum (strain Loch Maree / Type A3) protein is DNA mismatch repair protein MutS.